The following is an 85-amino-acid chain: Hepcidin (85 aa).

The signal sequence occupies residues 1 to 24 (MKTFSVAVAVAVVLAFICLQESSA). Positions 25 to 64 (VPVTEVQELEEPMSNEYQEMPVESWKMPYNNRHKRHSSPG) are excised as a propeptide. Cystine bridges form between Cys66–Cys83, Cys69–Cys72, Cys70–Cys79, and Cys73–Cys82.

In terms of tissue distribution, predominantly expressed in liver.

The protein localises to the secreted. Functionally, seems to act as a signaling molecule involved in the maintenance of iron homeostasis. Seems to be required in conjunction with HFE to regulate both intestinal iron absorption and iron storage in macrophages. Antimicrobial activity against Gram-negative bacteria such as E.coli. The polypeptide is Hepcidin (hamp) (Morone chrysops x Morone saxatilis (White bass x Striped bass)).